The sequence spans 120 residues: Small ribosomal subunit protein eS24 (120 aa).

The disordered stretch occupies residues Arg101 to Gly120.

It belongs to the eukaryotic ribosomal protein eS24 family.

The sequence is that of Small ribosomal subunit protein eS24 from Saccharolobus islandicus (strain M.16.27) (Sulfolobus islandicus).